Consider the following 269-residue polypeptide: Cytochrome c oxidase subunit 3 (269 aa).

Helical transmembrane passes span 21-41, 45-65, 90-110, 138-160, 167-187, 205-225, and 247-267; these read PWPIVVSFSLLSLALSLALAM, IGNMNLVWLALFVLTSSATLW, GFLLFVVSEVLIFAGLFWAYF, PLLNTIILLASGATVTYSHHALI, ALSGLFITTWLIIIFVICQYI, FYAGTGLHFLHMVMLATMLAI, and VIYLHVLDIIWLFLYIVFYWW.

Belongs to the cytochrome c oxidase subunit 3 family. In terms of assembly, component of the cytochrome c oxidase (complex IV, CIV), a multisubunit enzyme composed of a catalytic core of 3 subunits and several supernumerary subunits. The complex exists as a monomer or a dimer and forms supercomplexes (SCs) in the inner mitochondrial membrane with ubiquinol-cytochrome c oxidoreductase (cytochrome b-c1 complex, complex III, CIII).

Its subcellular location is the mitochondrion inner membrane. The catalysed reaction is 4 Fe(II)-[cytochrome c] + O2 + 8 H(+)(in) = 4 Fe(III)-[cytochrome c] + 2 H2O + 4 H(+)(out). Its function is as follows. Component of the cytochrome c oxidase, the last enzyme in the mitochondrial electron transport chain which drives oxidative phosphorylation. The respiratory chain contains 3 multisubunit complexes succinate dehydrogenase (complex II, CII), ubiquinol-cytochrome c oxidoreductase (cytochrome b-c1 complex, complex III, CIII) and cytochrome c oxidase (complex IV, CIV), that cooperate to transfer electrons derived from NADH and succinate to molecular oxygen, creating an electrochemical gradient over the inner membrane that drives transmembrane transport and the ATP synthase. Cytochrome c oxidase is the component of the respiratory chain that catalyzes the reduction of oxygen to water. Electrons originating from reduced cytochrome c in the intermembrane space (IMS) are transferred via the dinuclear copper A center (CU(A)) of subunit 2 and heme A of subunit 1 to the active site in subunit 1, a binuclear center (BNC) formed by heme A3 and copper B (CU(B)). The BNC reduces molecular oxygen to 2 water molecules using 4 electrons from cytochrome c in the IMS and 4 protons from the mitochondrial matrix. This Lachancea kluyveri (strain ATCC 58438 / CBS 3082 / BCRC 21498 / NBRC 1685 / JCM 7257 / NCYC 543 / NRRL Y-12651) (Yeast) protein is Cytochrome c oxidase subunit 3 (COX3).